The sequence spans 241 residues: Megakaryocyte and platelet inhibitory receptor G6b (241 aa).

The N-terminal stretch at 1-17 (MAVFLQLLPLLLSRAQG) is a signal peptide. At 18 to 142 (NPGASLDGRP…GPTHGSVYPQ (125 aa)) the chain is on the extracellular side. Asn32 carries N-linked (GlcNAc...) asparagine glycosylation. Residues 143-163 (LLIPLLGAGLVLGLGALGLVW) traverse the membrane as a helical segment. Topologically, residues 164 to 241 (WLHRRLPPQP…DASTIYAVVV (78 aa)) are cytoplasmic. Short sequence motifs (ITIM motif) lie at residues 209–214 (LLYADL) and 235–240 (TIYAVV). Phosphotyrosine is present on Tyr211.

Interacts (via ITIM motif) with PTPN6 and PTPN11. Binds to heparin. All isoforms are N-glycosylated. In terms of processing, isoform E is O-glycosylated. Post-translationally, phosphorylated. In terms of tissue distribution, expressed in platelets. Expressed in a restricted set of hematopoietic cell lines including the erythroleukemia cell line K-562 and the T-cell leukemia cell lines MOLT-4 and Jurkat. Not detected in the monocyte-like cell line U-937, the B-cell-like cell line Raji, the fibroblast cell lines TK and HeLa, or the natural killer cell lines NKL, NK 62 and YT.

The protein localises to the endoplasmic reticulum. The protein resides in the golgi apparatus. It is found in the cell membrane. Functionally, inhibitory receptor that acts as a critical regulator of hematopoietic lineage differentiation, megakaryocyte function and platelet production. Inhibits platelet aggregation and activation by agonists such as ADP and collagen-related peptide. This regulation of megakaryocate function as well as platelet production ann activation is done through the inhibition (via the 2 ITIM motifs) of the receptors CLEC1B and GP6:FcRgamma signaling. Appears to operate in a calcium-independent manner. In terms of biological role, isoform B, displayed in this entry, is the only isoform to contain both a transmembrane region and 2 immunoreceptor tyrosine-based inhibitor motifs (ITIMs) and, thus, the only one which probably has a role of inhibitory receptor. Isoform A may be the activating counterpart of isoform B. This Homo sapiens (Human) protein is Megakaryocyte and platelet inhibitory receptor G6b.